The chain runs to 228 residues: 2-C-methyl-D-erythritol 4-phosphate cytidylyltransferase (228 aa).

It belongs to the IspD/TarI cytidylyltransferase family. IspD subfamily.

The catalysed reaction is 2-C-methyl-D-erythritol 4-phosphate + CTP + H(+) = 4-CDP-2-C-methyl-D-erythritol + diphosphate. Its pathway is isoprenoid biosynthesis; isopentenyl diphosphate biosynthesis via DXP pathway; isopentenyl diphosphate from 1-deoxy-D-xylulose 5-phosphate: step 2/6. Functionally, catalyzes the formation of 4-diphosphocytidyl-2-C-methyl-D-erythritol from CTP and 2-C-methyl-D-erythritol 4-phosphate (MEP). This chain is 2-C-methyl-D-erythritol 4-phosphate cytidylyltransferase, found in Crocosphaera subtropica (strain ATCC 51142 / BH68) (Cyanothece sp. (strain ATCC 51142)).